The primary structure comprises 816 residues: Leucine--tRNA ligase (816 aa).

The short motif at 46–56 is the 'HIGH' region element; that stretch reads PYPSGALHMGH. Residues 638–642 carry the 'KMSKS' region motif; the sequence is KMSKS. Lys-641 lines the ATP pocket.

This sequence belongs to the class-I aminoacyl-tRNA synthetase family.

It localises to the cytoplasm. It catalyses the reaction tRNA(Leu) + L-leucine + ATP = L-leucyl-tRNA(Leu) + AMP + diphosphate. The sequence is that of Leucine--tRNA ligase from Xanthomonas campestris pv. campestris (strain ATCC 33913 / DSM 3586 / NCPPB 528 / LMG 568 / P 25).